The following is a 382-amino-acid chain: Chorismate synthase (382 aa).

NADP(+) is bound by residues Arg39 and Arg45. Residues Arg128–Ser130, Gln246–Ala247, Ala290, Lys305–Thr309, and Arg331 each bind FMN.

This sequence belongs to the chorismate synthase family. As to quaternary structure, homotetramer. FMNH2 serves as cofactor.

The enzyme catalyses 5-O-(1-carboxyvinyl)-3-phosphoshikimate = chorismate + phosphate. It participates in metabolic intermediate biosynthesis; chorismate biosynthesis; chorismate from D-erythrose 4-phosphate and phosphoenolpyruvate: step 7/7. Catalyzes the anti-1,4-elimination of the C-3 phosphate and the C-6 proR hydrogen from 5-enolpyruvylshikimate-3-phosphate (EPSP) to yield chorismate, which is the branch point compound that serves as the starting substrate for the three terminal pathways of aromatic amino acid biosynthesis. This reaction introduces a second double bond into the aromatic ring system. In Deinococcus geothermalis (strain DSM 11300 / CIP 105573 / AG-3a), this protein is Chorismate synthase.